Reading from the N-terminus, the 147-residue chain is Ribonuclease 4 (147 aa).

The first 28 residues, 1 to 28, serve as a signal peptide directing secretion; it reads MDIQRTQSLLLLLLLTLLGLGLVQPSYG. Glutamine 29 bears the Pyrrolidone carboxylic acid mark. Residues arginine 35, histidine 40, lysine 68, asparagine 71, and threonine 72 each contribute to the dUMP site. The active-site Proton acceptor is histidine 40. 4 disulfides stabilise this stretch: cysteine 53–cysteine 109, cysteine 67–cysteine 120, cysteine 85–cysteine 135, and cysteine 92–cysteine 99. The active-site Proton donor is the histidine 144. Residue phenylalanine 145 coordinates dUMP.

The protein belongs to the pancreatic ribonuclease family.

Its subcellular location is the secreted. Its function is as follows. Cleaves preferentially after uridine bases. Has antimicrobial activity against uropathogenic E.coli (UPEC). Probably contributes to urinary tract sterility. The chain is Ribonuclease 4 (Rnase4) from Rattus norvegicus (Rat).